The primary structure comprises 72 residues: Translation initiation factor IF-1 (72 aa).

The S1-like domain occupies 1–72 (MAKEDTLEFP…TKGRINYRFK (72 aa)).

Belongs to the IF-1 family. Component of the 30S ribosomal translation pre-initiation complex which assembles on the 30S ribosome in the order IF-2 and IF-3, IF-1 and N-formylmethionyl-tRNA(fMet); mRNA recruitment can occur at any time during PIC assembly.

It localises to the cytoplasm. Its function is as follows. One of the essential components for the initiation of protein synthesis. Stabilizes the binding of IF-2 and IF-3 on the 30S subunit to which N-formylmethionyl-tRNA(fMet) subsequently binds. Helps modulate mRNA selection, yielding the 30S pre-initiation complex (PIC). Upon addition of the 50S ribosomal subunit IF-1, IF-2 and IF-3 are released leaving the mature 70S translation initiation complex. This is Translation initiation factor IF-1 from Roseobacter denitrificans (strain ATCC 33942 / OCh 114) (Erythrobacter sp. (strain OCh 114)).